We begin with the raw amino-acid sequence, 465 residues long: Polyadenylation factor subunit 2 (465 aa).

Positions 1–20 (MDGHNQNQYQNQNQIQQSQQ) are enriched in low complexity. The segment at 1-26 (MDGHNQNQYQNQNQIQQSQQPPLKKY) is disordered. 5 WD repeats span residues 133 to 163 (AHDS…KIWQ), 175 to 205 (AHTE…KIWN), 217 to 247 (GHHW…KLWD), 259 to 290 (KFKH…RVFD), and 348 to 378 (AHDK…RFWT). The segment at 417-465 (EFGAAPPPPATLEPHALPNMNGFINKKPRQEIPGIDSNIKSSTLPGLSI) is disordered. A compositionally biased stretch (polar residues) spans 454–465 (NIKSSTLPGLSI).

As to quaternary structure, component of the cleavage and polyadenylation factor (CPF) complex, which is composed of at least PTI1, SYC1, SSU72, GLC7, MPE1, REF2, PFS2, PTA1, YSH1/BRR5, SWD2, CFT2/YDH1, YTH1, CFT1/YHH1, FIP1 and PAP1. Interacts with YSH1/BRR5, FIP1 and RNA14.

Its subcellular location is the nucleus. In terms of biological role, integral and essential component of the cleavage and polyadenylation factor (CPF) complex, which plays a key role in polyadenylation-dependent pre-mRNA 3'-end formation and cooperates with cleavage factors including the CFIA complex and NAB4/CFIB. May bridge the CPF and CFIA complexes. In Saccharomyces cerevisiae (strain ATCC 204508 / S288c) (Baker's yeast), this protein is Polyadenylation factor subunit 2 (PFS2).